A 952-amino-acid polypeptide reads, in one-letter code: MMENKRSLLKITQNIQNVTSKLAKLREILDLEMKMIDATELCNQQLVVKFLNSLPQEQGGLIEFVTTHYVYFLFKNCTLSPQFLERGTEHEEVVSKCLHLLKSAVECMSQITSDLFGCQGSGLLSNRNILSELQLFLTWAQNVNRNSTELTSLPTTPVQTFLCAEEIMSLLYLSKLYNTIPSVQFNMPNFQTMGVLEQWTISLYTSTVGLPTGPYQLPNATELACALVSRHADLFISPTHVSQPLLTFPFAKKRANLIFQSYLNNPQASITETGPLVQLREADLQTLDTTFFFLYDYIFEALSNNQAYSCSAATVNNFIARCVDSLTDLGSNLLEASTASRGPSNNIDAFKGFLLRAGLTEKNCSDFKTLLLLNKSNGHTQWKQFPKLLRLVTQLTLTAHYFYACLQQYSPTSLARCKITDTLKMAAAEQMVEYQASGSGKQSKPFEWTIPGILSFFIPQPPTELLQVMSDNISSPYMQSFFWISAHRAWQLKPHTILQRELSPTPLPSSPCNEEDVKKYCREIQVGDTAYQLNIVKCDTFELEFIKTHAFPILQNIFSMDLHIHRAMVQLRWLITFAADAPPFLSTLRKPLILLYFQINDIISQNRVDTSFINMLDYTKDVLTAVQEAVPSAEFSPNLINYLFLTHFSSSLKILMDTVNEFVTETTTVAESVASLARVGATICHSVFSFNTRNDTLEFPIAGENGDEIFQISVPAFKSTVANLQQNCYDVIVLLNESSRELHASYLDLQVISSDIDSMRNHSIKFDHASLNFKGMKDFYIKCFALQNKLASKIANTCCYSLTRRFAPLFEPELISLQTVENILNFSDTVDDPSVFLSGINQPMGCVPPNCQQGAVEKLSKQDVLDIRELAPDFTEGASSAPANATVIKHNFTGTFDKVSIDLDQSSLNTEFTFADKEYNLRTLRQLKLIFLEDLLSNTPQSPPPTDPALTN.

The interaction with large tegument protein stretch occupies residues 490–952; it reads WQLKPHTILQ…PPPTDPALTN (463 aa).

This sequence belongs to the herpesviridae inner tegument protein family. As to quaternary structure, interacts (via C-terminus) with the large tegument protein/LTP (via N-terminus).

It is found in the virion tegument. Its subcellular location is the host cytoplasm. The protein resides in the host nucleus. It localises to the host Golgi apparatus. The protein localises to the host trans-Golgi network. Plays an essential role in cytoplasmic secondary envelopment during viral egress. Interacts with the capsid via the large tegument protein/LTP and participates in its transport to the host trans-Golgi network (TGN) where secondary envelopment occurs. Modulates tegumentation and capsid accumulation at the viral assembly complex. The sequence is that of Inner tegument protein (63) from Connochaetes taurinus (Blue wildebeest).